A 410-amino-acid chain; its full sequence is Phosphoglycerate kinase (410 aa).

Residues 19-21, Arg34, 57-60, Arg114, and Arg154 each bind substrate; these read DLN and HQGK. Residues Glu332 and 358-361 contribute to the ATP site; that span reads GGHS.

It belongs to the phosphoglycerate kinase family. Homodimer.

It localises to the cytoplasm. It carries out the reaction (2R)-3-phosphoglycerate + ATP = (2R)-3-phospho-glyceroyl phosphate + ADP. Its pathway is carbohydrate degradation; glycolysis; pyruvate from D-glyceraldehyde 3-phosphate: step 2/5. The protein is Phosphoglycerate kinase (pgk) of Pyrococcus horikoshii (strain ATCC 700860 / DSM 12428 / JCM 9974 / NBRC 100139 / OT-3).